A 259-amino-acid chain; its full sequence is Putative protein phosphatase (259 aa).

The PPM-type phosphatase domain occupies 8–255 (LFASLSKKGP…DNITLNLINL (248 aa)).

The enzyme catalyses O-phospho-L-seryl-[protein] + H2O = L-seryl-[protein] + phosphate. The catalysed reaction is O-phospho-L-threonyl-[protein] + H2O = L-threonyl-[protein] + phosphate. The sequence is that of Putative protein phosphatase from Mycoplasma pneumoniae (strain ATCC 29342 / M129 / Subtype 1) (Mycoplasmoides pneumoniae).